Here is a 782-residue protein sequence, read N- to C-terminus: E3 ubiquitin-protein ligase SopA (782 aa).

A disordered region spans residues 137–171 (VSVSANNRPTVSEGRTPPVSPSLSLQATSSPSSPA). Positions 157-171 (PSLSLQATSSPSSPA) are enriched in low complexity. Catalysis depends on Cys-753, which acts as the Glycyl thioester intermediate.

This sequence belongs to the SopA E3 ligase family. Post-translationally, ubiquitinated in the presence of host E1 ubiquitin-activating enzyme, E2 ubiquitin-conjugating enzyme and ubiquitin.

The protein localises to the secreted. It is found in the host cell. It carries out the reaction S-ubiquitinyl-[E2 ubiquitin-conjugating enzyme]-L-cysteine + [acceptor protein]-L-lysine = [E2 ubiquitin-conjugating enzyme]-L-cysteine + N(6)-ubiquitinyl-[acceptor protein]-L-lysine.. Its function is as follows. Effector proteins function to alter host cell physiology and promote bacterial survival in host tissues. This protein is an E3 ubiquitin ligase that interferes with host's ubiquitination pathway. In Salmonella enteritidis PT4 (strain P125109), this protein is E3 ubiquitin-protein ligase SopA (sopA).